The following is a 198-amino-acid chain: MVNYPHQISRKIAQVRTKKSNRVDFANRGMNFESAINATNDYYLSRGLAVIHKKPTPVQIVKVDYPKRSRAKIVEAYFRQASTTDYSGVYKGYYIDFEAKETRQKTSMPMKNFHAHQIKHMSQVINQDGICFVLLHFSTLKETYLLPAKDLIAFYQIDKGTKSMPLDYIKKRGYAIAESAYPQVPYLEIIEKLLGGNT.

Residues Thr83, Asp85, Glu98, and Gln117 each contribute to the Mg(2+) site.

It belongs to the RecU family. Mg(2+) serves as cofactor.

Its subcellular location is the cytoplasm. It carries out the reaction Endonucleolytic cleavage at a junction such as a reciprocal single-stranded crossover between two homologous DNA duplexes (Holliday junction).. Its function is as follows. Endonuclease that resolves Holliday junction intermediates in genetic recombination. Cleaves mobile four-strand junctions by introducing symmetrical nicks in paired strands. Promotes annealing of linear ssDNA with homologous dsDNA. Required for DNA repair, homologous recombination and chromosome segregation. The chain is Holliday junction resolvase RecU from Streptococcus thermophilus (strain CNRZ 1066).